A 71-amino-acid chain; its full sequence is Large ribosomal subunit protein bL31 (71 aa).

Positions 16, 18, 37, and 40 each coordinate Zn(2+).

The protein belongs to the bacterial ribosomal protein bL31 family. Type A subfamily. As to quaternary structure, part of the 50S ribosomal subunit. Zn(2+) serves as cofactor.

Functionally, binds the 23S rRNA. The chain is Large ribosomal subunit protein bL31 from Pseudomonas aeruginosa (strain LESB58).